The sequence spans 117 residues: LYR motif-containing protein 1 (117 aa).

This sequence belongs to the complex I LYR family.

The chain is LYR motif-containing protein 1 (lyrm1) from Dictyostelium discoideum (Social amoeba).